The chain runs to 352 residues: C-C chemokine receptor type 5 (352 aa).

Over 1–30 (MDYQVSSPTYDIDYYTSEPCQKINVKQIAA) the chain is Extracellular. Residue Y3 is modified to Sulfotyrosine. O-linked (GalNAc...) serine glycosylation is found at S6 and S7. 3 positions are modified to sulfotyrosine: Y10, Y14, and Y15. Cystine bridges form between C20–C269 and C101–C178. Residues 31–58 (RLLPPLYSLVFIFGFVGNILVVLILINC) form a helical membrane-spanning segment. Residues 59–68 (KRLKSMTDIY) are Cytoplasmic-facing. The chain crosses the membrane as a helical span at residues 69 to 89 (LLNLAISDLLFLLTVPFWAHY). Over 90 to 102 (AAAQWDFGNTMCQ) the chain is Extracellular. A helical membrane pass occupies residues 103–124 (LLTGLYFIGFFSGIFFIILLTI). Topologically, residues 125–141 (DRYLAIVHAVFALKART) are cytoplasmic. The helical transmembrane segment at 142-166 (VTFGVVTSVITWVVAVFASLPGIIF) threads the bilayer. Residues 167 to 198 (TRSQREGLHYTCSSHFPYSQYQFWKNFQTLKI) lie on the Extracellular side of the membrane. A helical membrane pass occupies residues 199–218 (VILGLVLPLLVMVICYSGIL). The Cytoplasmic segment spans residues 219-235 (KTLLRCRNEKKRHRAVR). A helical transmembrane segment spans residues 236 to 260 (LIFTIMIVYFLFWAPYNIVLLLNTF). The Extracellular portion of the chain corresponds to 261–277 (QEFFGLNNCSSSNRLDQ). The helical transmembrane segment at 278-301 (AMQVTETLGMTHCCINPIIYAFVG) threads the bilayer. Over 302 to 352 (EKFRNYLLVFFQKHIAKRFCKCCSIFQQEAPERASSVYTRSTGEQEISVGL) the chain is Cytoplasmic. S-palmitoyl cysteine attachment occurs at residues C321, C323, and C324. Phosphoserine; by BARK1 occurs at positions 336, 337, 342, and 349.

The protein belongs to the G-protein coupled receptor 1 family. In terms of assembly, interacts with PRAF2. Efficient ligand binding to CCL3/MIP-1alpha and CCL4/MIP-1beta requires sulfation, O-glycosylation and sialic acid modifications. Glycosylation on Ser-6 is required for efficient binding of CCL4. Interacts with GRK2. Interacts with ARRB1 and ARRB2. Interacts with CNIH4. Interacts with S100A4; this interaction stimulates T-lymphocyte chemotaxis. In terms of processing, sulfated on at least 2 of the N-terminal tyrosines. Sulfation is required for efficient binding of the chemokines, CCL3 and CCL4. Post-translationally, palmitoylation in the C-terminal is important for cell surface expression. Phosphorylation on serine residues in the C-terminal is stimulated by binding CC chemokines especially by APO-RANTES. In terms of processing, O-glycosylated, but not N-glycosylated. Ser-6 appears to be the major site even if Ser-7 may be also O-glycosylated. Also sialylated glycans present which contribute to chemokine binding. Thr-16 and Ser-17 may also be glycosylated and, if so, with small moieties such as a T-antigen.

It is found in the cell membrane. Functionally, receptor for a number of inflammatory CC-chemokines including CCL3/MIP-1-alpha, CCL4/MIP-1-beta and RANTES and subsequently transduces a signal by increasing the intracellular calcium ion level. May play a role in the control of granulocytic lineage proliferation or differentiation. Participates in T-lymphocyte migration to the infection site by acting as a chemotactic receptor. The protein is C-C chemokine receptor type 5 (CCR5) of Papio anubis (Olive baboon).